A 166-amino-acid chain; its full sequence is Protein phosphatase 1 regulatory subunit 1A (166 aa).

Position 1 is an N-acetylmethionine (methionine 1). Residues methionine 1–valine 166 form a disordered region. An essential for activity region spans residues lysine 9 to phenylalanine 12. Residues proline 19 to isoleucine 29 are compositionally biased toward basic and acidic residues. Position 35 is a phosphothreonine; by PKA (threonine 35). Residues threonine 42–arginine 54 are essential for activity. 4 positions are modified to phosphoserine: serine 43, serine 46, serine 47, and serine 67. Over residues alanine 104–glutamine 114 the composition is skewed to low complexity. Positions alanine 143–serine 152 are enriched in basic and acidic residues. Positions alanine 143 to valine 166 are interaction with PPP1R15A. The segment covering threonine 153–valine 166 has biased composition (polar residues).

This sequence belongs to the protein phosphatase inhibitor 1 family. In terms of assembly, interacts with PPP1R15A. Phosphorylation of Thr-35 is required for activity.

Functionally, inhibitor of protein-phosphatase 1. This protein may be important in hormonal control of glycogen metabolism. Hormones that elevate intracellular cAMP increase I-1 activity in many tissues. I-1 activation may impose cAMP control over proteins that are not directly phosphorylated by PKA. Following a rise in intracellular calcium, I-1 is inactivated by calcineurin (or PP2B). Does not inhibit type-2 phosphatases. In Oryctolagus cuniculus (Rabbit), this protein is Protein phosphatase 1 regulatory subunit 1A (PPP1R1A).